The chain runs to 262 residues: 4-hydroxy-2-oxo-heptane-1,7-dioate aldolase (262 aa).

H45 (proton acceptor) is an active-site residue. Q147 serves as a coordination point for substrate. E149 is a binding site for a divalent metal cation. The substrate site is built by A174 and D175. Residue D175 coordinates a divalent metal cation.

The protein belongs to the HpcH/HpaI aldolase family. In terms of assembly, homohexamer; trimer of dimers. A divalent metal cation serves as cofactor.

The enzyme catalyses 4-hydroxy-2-oxoheptanedioate = succinate semialdehyde + pyruvate. Its pathway is aromatic compound metabolism; 4-hydroxyphenylacetate degradation; pyruvate and succinate semialdehyde from 4-hydroxyphenylacetate: step 7/7. Functionally, catalyzes the reversible retro-aldol cleavage of 4-hydroxy-2-ketoheptane-1,7-dioate (HKHD) to pyruvate and succinic semialdehyde. The polypeptide is 4-hydroxy-2-oxo-heptane-1,7-dioate aldolase (Shigella boydii serotype 4 (strain Sb227)).